A 162-amino-acid polypeptide reads, in one-letter code: Peptide deformylase (162 aa).

Fe cation-binding residues include C86 and H128. E129 is a catalytic residue. Position 132 (H132) interacts with Fe cation.

The protein belongs to the polypeptide deformylase family. Fe(2+) is required as a cofactor.

The enzyme catalyses N-terminal N-formyl-L-methionyl-[peptide] + H2O = N-terminal L-methionyl-[peptide] + formate. Functionally, removes the formyl group from the N-terminal Met of newly synthesized proteins. Requires at least a dipeptide for an efficient rate of reaction. N-terminal L-methionine is a prerequisite for activity but the enzyme has broad specificity at other positions. The protein is Peptide deformylase of Treponema pallidum (strain Nichols).